The chain runs to 176 residues: MHPMIPAEYISNIIYEGPGADSLFFASGQLRELAYSVETTAESLEDELDELDENWKGSSSDLLADAVERYLQWLSKHSSQLKHAAWVINGLANAYNDTRRKVVPPEEIAANREERRRLIASNVAGVNTPAIADLDAQYDQYRARNVAVMNAYVSWTRSALSDLPRWREPPQIYRGG.

It belongs to the mycobacterial PPE family. As to quaternary structure, interacts with human TLR2.

Its subcellular location is the secreted. It is found in the cell wall. It localises to the cell surface. Plays a key role in regulating innate and adaptive immune responses through human Toll-like receptor 2 (TLR2). Interacts with TLR2, leading to the subsequent activation of the mitogen-activated protein kinase (MAPK) and nuclear factor kappa B (NF-kappa-B) signaling pathways. Induces macrophage activation by augmenting the expression of several cell surface molecules (CD40, CD80, CD86 and MHC class II) and pro-inflammatory cytokines (TNF-alpha, IL-6 and IL-12p40) within macrophages. Also participates in adaptive immunity by directing Th1-polarised immune responses. Stimulates specific humoral and cellular immune responses in tuberculosis (TB) patients. Induces a strong IgG(1) antibody response and an increased Th1/Th2 type immune response in mice. The chain is PPE family protein PPE57 from Mycobacterium tuberculosis (strain ATCC 25618 / H37Rv).